A 123-amino-acid polypeptide reads, in one-letter code: Large ribosomal subunit protein uL14 (123 aa).

The protein belongs to the universal ribosomal protein uL14 family. As to quaternary structure, part of the 50S ribosomal subunit. Forms a cluster with proteins L3 and L19. In the 70S ribosome, L14 and L19 interact and together make contacts with the 16S rRNA in bridges B5 and B8.

Its function is as follows. Binds to 23S rRNA. Forms part of two intersubunit bridges in the 70S ribosome. In Blochmanniella floridana, this protein is Large ribosomal subunit protein uL14.